The sequence spans 630 residues: 1-deoxy-D-xylulose-5-phosphate synthase (630 aa).

Thiamine diphosphate contacts are provided by residues H75 and 116–118 (GHS). D147 serves as a coordination point for Mg(2+). Thiamine diphosphate is bound by residues 148-149 (GA), N176, Y287, and E367. N176 serves as a coordination point for Mg(2+).

It belongs to the transketolase family. DXPS subfamily. In terms of assembly, homodimer. Requires Mg(2+) as cofactor. Thiamine diphosphate is required as a cofactor.

The catalysed reaction is D-glyceraldehyde 3-phosphate + pyruvate + H(+) = 1-deoxy-D-xylulose 5-phosphate + CO2. It functions in the pathway metabolic intermediate biosynthesis; 1-deoxy-D-xylulose 5-phosphate biosynthesis; 1-deoxy-D-xylulose 5-phosphate from D-glyceraldehyde 3-phosphate and pyruvate: step 1/1. Catalyzes the acyloin condensation reaction between C atoms 2 and 3 of pyruvate and glyceraldehyde 3-phosphate to yield 1-deoxy-D-xylulose-5-phosphate (DXP). The chain is 1-deoxy-D-xylulose-5-phosphate synthase from Treponema pallidum (strain Nichols).